A 261-amino-acid polypeptide reads, in one-letter code: Small ribosomal subunit protein uS2 (261 aa).

The tract at residues Gly224–Asp261 is disordered. Residues Glu245 to Glu254 are compositionally biased toward acidic residues.

This sequence belongs to the universal ribosomal protein uS2 family.

The chain is Small ribosomal subunit protein uS2 from Lactobacillus gasseri (strain ATCC 33323 / DSM 20243 / BCRC 14619 / CIP 102991 / JCM 1131 / KCTC 3163 / NCIMB 11718 / NCTC 13722 / AM63).